We begin with the raw amino-acid sequence, 343 residues long: Uroporphyrinogen decarboxylase (343 aa).

Residues Arg24–Arg28, Phe43, Asp74, Tyr151, Ser206, and His321 each bind substrate.

It belongs to the uroporphyrinogen decarboxylase family. As to quaternary structure, homodimer.

The protein localises to the cytoplasm. The enzyme catalyses uroporphyrinogen III + 4 H(+) = coproporphyrinogen III + 4 CO2. It functions in the pathway porphyrin-containing compound metabolism; protoporphyrin-IX biosynthesis; coproporphyrinogen-III from 5-aminolevulinate: step 4/4. Its function is as follows. Catalyzes the decarboxylation of four acetate groups of uroporphyrinogen-III to yield coproporphyrinogen-III. The polypeptide is Uroporphyrinogen decarboxylase (Thermosynechococcus vestitus (strain NIES-2133 / IAM M-273 / BP-1)).